Here is a 262-residue protein sequence, read N- to C-terminus: Conserved oligomeric Golgi complex subunit 2 (262 aa).

In terms of assembly, component of the conserved oligomeric Golgi (COG or Sec34/Sec35) complex which consists of eight different proteins COG1-COG8. The COG complex interacts with the Rab GTPase YPT1, the Glogi SNAREs GOS1, SEC22, SED5, VTI1 and YKT6 and the COPI coatomer subunit gamma SEC21.

It is found in the golgi apparatus membrane. Functionally, acts as a component of the peripheral membrane COG complex that is involved in intra-Golgi protein trafficking. COG is located at the cis-Golgi, and regulates tethering of retrograde intra-Golgi vesicles and possibly a number of other membrane trafficking events. COG2 is required for ER to Golgi vesicle docking. Not essential for viability. The chain is Conserved oligomeric Golgi complex subunit 2 (COG2) from Saccharomyces cerevisiae (strain ATCC 204508 / S288c) (Baker's yeast).